We begin with the raw amino-acid sequence, 122 residues long: Large ribosomal subunit protein uL14 (122 aa).

Belongs to the universal ribosomal protein uL14 family. Part of the 50S ribosomal subunit. Forms a cluster with proteins L3 and L19. In the 70S ribosome, L14 and L19 interact and together make contacts with the 16S rRNA in bridges B5 and B8.

Functionally, binds to 23S rRNA. Forms part of two intersubunit bridges in the 70S ribosome. The protein is Large ribosomal subunit protein uL14 of Malacoplasma penetrans (strain HF-2) (Mycoplasma penetrans).